The following is a 264-amino-acid chain: MSKPTTIAVLQKCKQEKKRFATITAYDYSFAKLFADEGINVMLVGDSLGMTIQGHDSTLPVTVEDIAYHTRAVRRGAPNCLLLSDLPFMAYATPEQAFENAAIVMRAGANMVKIEGGAWLVDTVKMLTERAVPVCGHLGLTPQSVNIFGGYKIQGRGDAGQILLDDALALEAAGAQLLVLECVPVELAKRVTEALSIPVIGIGAGNVTDGQILVMHDAFGITGGHIPKFAKNFLAEAGDMRAAVRQYMAEVESGVYPGEEHSFH.

Asp46 and Asp85 together coordinate Mg(2+). 3-methyl-2-oxobutanoate-binding positions include 46-47, Asp85, and Lys113; that span reads DS. Glu115 provides a ligand contact to Mg(2+). Catalysis depends on Glu181, which acts as the Proton acceptor.

The protein belongs to the PanB family. As to quaternary structure, homodecamer; pentamer of dimers. The cofactor is Mg(2+).

It is found in the cytoplasm. It catalyses the reaction 3-methyl-2-oxobutanoate + (6R)-5,10-methylene-5,6,7,8-tetrahydrofolate + H2O = 2-dehydropantoate + (6S)-5,6,7,8-tetrahydrofolate. The protein operates within cofactor biosynthesis; (R)-pantothenate biosynthesis; (R)-pantoate from 3-methyl-2-oxobutanoate: step 1/2. Its function is as follows. Catalyzes the reversible reaction in which hydroxymethyl group from 5,10-methylenetetrahydrofolate is transferred onto alpha-ketoisovalerate to form ketopantoate. This chain is 3-methyl-2-oxobutanoate hydroxymethyltransferase, found in Salmonella typhi.